The following is a 473-amino-acid chain: BPI fold-containing family B member 3 (473 aa).

An N-terminal signal peptide occupies residues 1–20 (MMLGVYTLLLLWGLATPCLG). N-linked (GlcNAc...) asparagine glycosylation is present at Asn139. Residues Cys161 and Cys196 are joined by a disulfide bond.

This sequence belongs to the BPI/LBP/Plunc superfamily. BPI/LBP family.

Its subcellular location is the secreted. Functionally, may have the capacity to recognize and bind specific classes of odorants. May act as a carrier molecule, transporting odorants across the mucus layer to access receptor sites. May serve as a primary defense mechanism by recognizing and removing potentially harmful odorants or pathogenic microorganisms from the mucosa or clearing excess odorant from mucus to enable new odorant stimuli to be received. This chain is BPI fold-containing family B member 3, found in Mus musculus (Mouse).